The following is a 116-amino-acid chain: Large ribosomal subunit protein bL20 (116 aa).

It belongs to the bacterial ribosomal protein bL20 family.

Binds directly to 23S ribosomal RNA and is necessary for the in vitro assembly process of the 50S ribosomal subunit. It is not involved in the protein synthesizing functions of that subunit. In Phocaeicola vulgatus (strain ATCC 8482 / DSM 1447 / JCM 5826 / CCUG 4940 / NBRC 14291 / NCTC 11154) (Bacteroides vulgatus), this protein is Large ribosomal subunit protein bL20.